The primary structure comprises 144 residues: Large ribosomal subunit protein uL15 (144 aa).

Residues 1–58 (MKLNNLSPAPGSKHAEKRVGRGIGSGLGKTGGRGHKGQKSRSGGSVKPGFEGGQMPLQ) form a disordered region. Residues 21 to 31 (RGIGSGLGKTG) are compositionally biased toward gly residues.

It belongs to the universal ribosomal protein uL15 family. In terms of assembly, part of the 50S ribosomal subunit.

Functionally, binds to the 23S rRNA. The sequence is that of Large ribosomal subunit protein uL15 from Chromohalobacter salexigens (strain ATCC BAA-138 / DSM 3043 / CIP 106854 / NCIMB 13768 / 1H11).